A 364-amino-acid polypeptide reads, in one-letter code: tRNA 2-selenouridine synthase (364 aa).

The region spanning 14–137 (LIADTPIIDV…LRQTAIQATI (124 aa)) is the Rhodanese domain. The active-site S-selanylcysteine intermediate is Cys97.

The protein belongs to the SelU family. In terms of assembly, monomer.

It carries out the reaction 5-methylaminomethyl-2-thiouridine(34) in tRNA + selenophosphate + (2E)-geranyl diphosphate + H2O + H(+) = 5-methylaminomethyl-2-selenouridine(34) in tRNA + (2E)-thiogeraniol + phosphate + diphosphate. It catalyses the reaction 5-methylaminomethyl-2-thiouridine(34) in tRNA + (2E)-geranyl diphosphate = 5-methylaminomethyl-S-(2E)-geranyl-thiouridine(34) in tRNA + diphosphate. The enzyme catalyses 5-methylaminomethyl-S-(2E)-geranyl-thiouridine(34) in tRNA + selenophosphate + H(+) = 5-methylaminomethyl-2-(Se-phospho)selenouridine(34) in tRNA + (2E)-thiogeraniol. The catalysed reaction is 5-methylaminomethyl-2-(Se-phospho)selenouridine(34) in tRNA + H2O = 5-methylaminomethyl-2-selenouridine(34) in tRNA + phosphate. In terms of biological role, involved in the post-transcriptional modification of the uridine at the wobble position (U34) of tRNA(Lys), tRNA(Glu) and tRNA(Gln). Catalyzes the conversion of 2-thiouridine (S2U-RNA) to 2-selenouridine (Se2U-RNA). Acts in a two-step process involving geranylation of 2-thiouridine (S2U) to S-geranyl-2-thiouridine (geS2U) and subsequent selenation of the latter derivative to 2-selenouridine (Se2U) in the tRNA chain. This Escherichia coli O45:K1 (strain S88 / ExPEC) protein is tRNA 2-selenouridine synthase.